Here is a 240-residue protein sequence, read N- to C-terminus: 1-(5-phosphoribosyl)-5-[(5-phosphoribosylamino)methylideneamino] imidazole-4-carboxamide isomerase (240 aa).

D8 serves as the catalytic Proton acceptor. D129 acts as the Proton donor in catalysis.

It belongs to the HisA/HisF family.

Its subcellular location is the cytoplasm. It catalyses the reaction 1-(5-phospho-beta-D-ribosyl)-5-[(5-phospho-beta-D-ribosylamino)methylideneamino]imidazole-4-carboxamide = 5-[(5-phospho-1-deoxy-D-ribulos-1-ylimino)methylamino]-1-(5-phospho-beta-D-ribosyl)imidazole-4-carboxamide. It functions in the pathway amino-acid biosynthesis; L-histidine biosynthesis; L-histidine from 5-phospho-alpha-D-ribose 1-diphosphate: step 4/9. The protein is 1-(5-phosphoribosyl)-5-[(5-phosphoribosylamino)methylideneamino] imidazole-4-carboxamide isomerase of Listeria monocytogenes serotype 4a (strain HCC23).